Here is a 701-residue protein sequence, read N- to C-terminus: Elongation factor G (701 aa).

The tr-type G domain occupies 11–287; the sequence is TKVRNIGIMA…AVIDYLPSPL (277 aa). Residues 20–27, 84–88, and 138–141 contribute to the GTP site; these read AHIDAGKT, DTPGH, and NKMD.

Belongs to the TRAFAC class translation factor GTPase superfamily. Classic translation factor GTPase family. EF-G/EF-2 subfamily.

The protein resides in the cytoplasm. Functionally, catalyzes the GTP-dependent ribosomal translocation step during translation elongation. During this step, the ribosome changes from the pre-translocational (PRE) to the post-translocational (POST) state as the newly formed A-site-bound peptidyl-tRNA and P-site-bound deacylated tRNA move to the P and E sites, respectively. Catalyzes the coordinated movement of the two tRNA molecules, the mRNA and conformational changes in the ribosome. The chain is Elongation factor G from Mycobacterium avium (strain 104).